The chain runs to 560 residues: Kinesin light chain 1 (560 aa).

A coiled-coil region spans residues 31-99; that stretch reads VIQGLEALKN…MALSNHLNAV (69 aa). A compositionally biased stretch (basic and acidic residues) spans 155–176; it reads KKYDDDISPSEDKDTDSTKEPL. The disordered stretch occupies residues 155-203; the sequence is KKYDDDISPSEDKDTDSTKEPLDDLFPNDEDDPGQGIQQQHSSAAAAAQ. Ser-162 carries the post-translational modification Phosphoserine. A compositionally biased stretch (low complexity) spans 192–203; it reads QQQHSSAAAAAQ. 5 TPR repeats span residues 213–246, 255–288, 297–330, 339–372, and 381–414; these read LRTL…LEKT, ATML…REKT, AATL…REKV, AKQL…YQTK, and AKTK…AHER. Phosphotyrosine is present on Tyr-449. Phosphoserine is present on Ser-460. The stretch at 464-497 is one TPR 6 repeat; the sequence is TTTLKNLGALYRRQGKFEAAETLEEAAMRSRKQG. Phosphoserine; by AMPK occurs at positions 521 and 524.

Belongs to the kinesin light chain family. In terms of assembly, oligomeric complex composed of two heavy chains and two light chains. Interacts with SPAG9. Interacts with ATCAY; may link mitochondria to KLC1 and regulate mitochondria localization into neuron projections. Interacts (via TPR repeats) with TOR1A; the interaction associates TOR1A with the kinesin oligomeric complex. Interacts with BORCS5. Interacts with MAPK8IP3/JIP3 and NTRK2/TRKB; interaction with NTRK2/TRKB is mediated by MAPK8IP3/JIP3. Interacts with CLSTN1; phosphorylation at Ser-460 inhibits interaction with CLSTN1. In terms of processing, phosphorylation at Ser-460 by ERK inhibits interaction with CLSTN1 and localization to cytoplasmic vesicles.

The protein localises to the cell projection. The protein resides in the growth cone. Its subcellular location is the cytoplasmic vesicle. It localises to the cytoplasm. It is found in the cytoskeleton. In terms of biological role, kinesin is a microtubule-associated force-producing protein that may play a role in organelle transport. The light chain may function in coupling of cargo to the heavy chain or in the modulation of its ATPase activity. The protein is Kinesin light chain 1 (KLC1) of Pongo abelii (Sumatran orangutan).